Here is a 178-residue protein sequence, read N- to C-terminus: MAGALRKTMIYLGLADGDEHYESEQSVATHHDEERPQAQEREERRAPAPVREVVREMPTVDAEEEYRAPVTPIKRAASSREDASGLRQITTVHPRSYNDAKVIGESFRDGIPVIMNVTDMGEADAKRLVDFSAGLVFGLHGSIERVTNKVFLLSPSYVEVIGDDKKASETQASFFNQS.

The segment covering 21–46 has biased composition (basic and acidic residues); that stretch reads YESEQSVATHHDEERPQAQEREERRA. Positions 21 to 65 are disordered; it reads YESEQSVATHHDEERPQAQEREERRAPAPVREVVREMPTVDAEEE.

This sequence belongs to the SepF family. In terms of assembly, homodimer. Interacts with FtsZ.

The protein resides in the cytoplasm. Cell division protein that is part of the divisome complex and is recruited early to the Z-ring. Probably stimulates Z-ring formation, perhaps through the cross-linking of FtsZ protofilaments. Its function overlaps with FtsA. The sequence is that of Cell division protein SepF from Paenarthrobacter aurescens (strain TC1).